Consider the following 132-residue polypeptide: Small ribosomal subunit protein uS8 (132 aa).

This sequence belongs to the universal ribosomal protein uS8 family. As to quaternary structure, part of the 30S ribosomal subunit. Contacts proteins S5 and S12.

Functionally, one of the primary rRNA binding proteins, it binds directly to 16S rRNA central domain where it helps coordinate assembly of the platform of the 30S subunit. The polypeptide is Small ribosomal subunit protein uS8 (Rickettsia massiliae (strain Mtu5)).